A 381-amino-acid polypeptide reads, in one-letter code: Tryptophan--tRNA ligase (381 aa).

Positions 82 to 90 (PSLGMHIGH) match the 'HIGH' region motif. The 'KMSKS' region signature appears at 254–258 (KMSSS).

The protein belongs to the class-I aminoacyl-tRNA synthetase family.

The protein resides in the cytoplasm. It catalyses the reaction tRNA(Trp) + L-tryptophan + ATP = L-tryptophyl-tRNA(Trp) + AMP + diphosphate + H(+). The polypeptide is Tryptophan--tRNA ligase (Sulfurisphaera tokodaii (strain DSM 16993 / JCM 10545 / NBRC 100140 / 7) (Sulfolobus tokodaii)).